The chain runs to 287 residues: RxLR effector protein Avr4 (287 aa).

Positions 1–24 (MRSLHILLVFTASLLASLTESAKA) are cleaved as a signal peptide. The RxLR-dEER motif lies at 42–55 (RFLRAQTDEKNEER). The tract at residues 115 to 138 (KYERMQWQKLKEGETLTFMRLGDR) is W1 motif. The tract at residues 148-171 (QLLRWVAQKKPVESVYDDLQVAGF) is W2 motif. Residues 221 to 244 (LFEKWAMEGTHIKSVITTLKLNGK) are W3 motif. The segment at 246–267 (ASEMANNENFPALLKYVKLYLD) is y motif.

It belongs to the RxLR effector family.

Its subcellular location is the secreted. The protein resides in the host cytoplasm. The protein localises to the host nucleus. It is found in the host nucleolus. It localises to the host cytoskeleton. Its function is as follows. Secreted effector that acts as an elicitor of hypersensitive response (HR) specifically on plants carrying defense protein R4, through its interaction with this protein. In Phytophthora infestans (strain T30-4) (Potato late blight agent), this protein is RxLR effector protein Avr4.